A 212-amino-acid polypeptide reads, in one-letter code: TATA-box-binding protein 2 (212 aa).

2 repeat units span residues 30 to 114 (THPE…KKIG) and 120 to 201 (SNFN…YPIL).

It belongs to the TBP family. Belongs to the TFIID complex together with the TBP-associated factors (TAFs). Binds DNA as monomer.

The protein localises to the nucleus. In terms of biological role, general transcription factor that functions at the core of the DNA-binding multiprotein factor TFIID. Binding of TFIID to the TATA box is the initial transcriptional step of the pre-initiation complex (PIC), playing a role in the activation of eukaryotic genes transcribed by RNA polymerase II. This Entamoeba histolytica (strain ATCC 30459 / HM-1:IMSS / ABRM) protein is TATA-box-binding protein 2.